Consider the following 319-residue polypeptide: 8-methylmenaquinol:fumarate reductase iron-sulfur subunit (319 aa).

One can recognise a 2Fe-2S ferredoxin-type domain in the interval M1–H96. C51, C56, C59, and C71 together coordinate [2Fe-2S] cluster. 4Fe-4S ferredoxin-type domains follow at residues F139–Y168 and V193–I224. The [4Fe-4S] cluster site is built by C148, C151, C154, C158, C204, C207, C210, and C214.

Belongs to the succinate dehydrogenase/fumarate reductase iron-sulfur protein family. In terms of assembly, the MFR complex is composed of three subunits: a flavoprotein (SdhA), an iron-sulfur protein (SdhB), and one hydrophobic anchor protein (SdhE). Requires [2Fe-2S] cluster as cofactor. [4Fe-4S] cluster is required as a cofactor.

Its subcellular location is the periplasm. It is found in the cell membrane. The enzyme catalyses 8-methylmenaquinone-6 + succinate = 8-methylmenaquinol-6 + fumarate. Functionally, iron-sulfur subunit of 8-methylmenaquinol:fumarate reductase (MFR), that catalyzes the reduction of fumarate using 8-methylmenaquinol-6 as electron donor. The complex shows no succinate oxidation activity. Is involved in anaerobic metabolism. The protein is 8-methylmenaquinol:fumarate reductase iron-sulfur subunit of Wolinella succinogenes (strain ATCC 29543 / DSM 1740 / CCUG 13145 / JCM 31913 / LMG 7466 / NCTC 11488 / FDC 602W) (Vibrio succinogenes).